The chain runs to 485 residues: MKEESILKKCDSSSIKHVPSTPLETNCPDKYNPKTWPIRLKVRNVIVISSMTFLNQYGDSVFAPSISNIAEQFHASRTLVTLGATLYTLGILFGNLIFAPLSEQFGRRPIYLIGYSVFALLQIPIALSVNLAMFLVFRFFSGLFGSVGLSNGSGSLADLFEKKDRGKYMVIYFTVLSIGPGIAPIISGFISQSSIGWQWEFWILLILSGFNLFWAFLLLKETYPPVLNRKKFEKYGEIGENEPVALRLTGKQLLIKLLILLSMKKPISILLSQPILICVACTIGSIYGMINLVLIAFSEVWKSSYDFSPGISGLMYISITLGLFSAVFIAMPINQKFYSYLVKRNGGEGEPEFRLPMGFIGITLFEIGILLFGWTARYKIFWFVPTIGSAIMGGGYIMTSNPLNMYVVDSYGIYSASASAGVKIFQLLLGAIFPLFAESLFRRLNYGWGCTLLAFILLACGCSLPILFKYGKQIRNLRPFDPSKY.

11 helical membrane passes run 79–99 (LVTL…LIFA), 117–137 (VFAL…FLVF), 139–159 (FFSG…LADL), 170–190 (VIYF…SGFI), 199–219 (WEFW…FLLL), 275–295 (ILIC…LVLI), 313–333 (GLMY…AMPI), 355–375 (LPMG…FGWT), 380–400 (IFWF…IMTS), 421–441 (GVKI…ESLF), and 448–468 (WGCT…PILF).

Belongs to the major facilitator superfamily. CAR1 family.

It is found in the golgi apparatus. The protein localises to the membrane. This is an uncharacterized protein from Schizosaccharomyces pombe (strain 972 / ATCC 24843) (Fission yeast).